We begin with the raw amino-acid sequence, 422 residues long: Vitamin D3 receptor B (422 aa).

Residues 20-95 (PRICGVCGDK…IGMMKEFILT (76 aa)) constitute a DNA-binding region (nuclear receptor). Zn(2+)-binding residues include C23, C26, C40, C43, C59, C65, C75, and C78. 2 NR C4-type zinc fingers span residues 23–43 (CGVC…CEGC) and 59–78 (CPFN…CQAC). The segment at 96–125 (DEEVQRKKELIQRRKDEEAHREAQKPRLSD) is hinge. Residues 106-128 (IQRRKDEEAHREAQKPRLSDEQR) form a disordered region. An NR LBD domain is found at 126–418 (EQRNIIDTLV…LTPLVLEVFG (293 aa)). Residue Y142 coordinates calcitriol. A disordered region spans residues 145 to 190 (SYSDFSRFRPPVREGPVTRSASRAASLHSLSDASSDSFSHSPESGD). Over residues 163–185 (RSASRAASLHSLSDASSDSFSHS) the composition is skewed to low complexity. Residue S234 participates in calcitriol binding. Residues 243-261 (KMIPGFRELTAEDQIALLK) are interaction with coactivator LXXLL motif. The calcitriol site is built by R271, S275, H302, and H392. A 9aaTAD motif is present at residues 411 to 419 (PLVLEVFGG).

It belongs to the nuclear hormone receptor family. In terms of assembly, homodimer in the absence of bound vitamin D3. Heterodimer with RXRA after vitamin D3 binding. Interacts with ncoa1 and possibly other coactivators, leading to a strong increase of transcription of target genes. In terms of tissue distribution, detected in embryo 24 to 48 hours after fertilization, and in intestinal bulb.

Its subcellular location is the nucleus. The protein resides in the cytoplasm. Nuclear receptor for calcitriol, the active form of vitamin D3 which mediates the action of this vitamin on cells. Enters the nucleus upon vitamin D3 binding where it forms heterodimers with the retinoid X receptor/RXR. The VDR-RXR heterodimers bind to specific response elements on DNA and activate the transcription of vitamin D3-responsive target genes. Recruited to promoters via its interaction with BAZ1B/WSTF which mediates the interaction with acetylated histones, an essential step for VDR-promoter association. Plays a central role in calcium homeostasis. The polypeptide is Vitamin D3 receptor B (vdrb) (Danio rerio (Zebrafish)).